We begin with the raw amino-acid sequence, 104 residues long: Pterin-4-alpha-carbinolamine dehydratase (104 aa).

Ala2 carries the post-translational modification N-acetylalanine. Substrate is bound by residues 61–63 (DHH) and 78–81 (STHE).

Belongs to the pterin-4-alpha-carbinolamine dehydratase family. In terms of assembly, homotetramer and homodimer. Heterotetramer with HNF1A; formed by a dimer of dimers. Interacts with HNF1B (via HNF-p1 domain); the interaction increases HNF1B transactivation activity.

Its subcellular location is the cytoplasm. The protein localises to the nucleus. The enzyme catalyses (4aS,6R)-4a-hydroxy-L-erythro-5,6,7,8-tetrahydrobiopterin = (6R)-L-erythro-6,7-dihydrobiopterin + H2O. Involved in tetrahydrobiopterin biosynthesis. Seems to both prevent the formation of 7-pterins and accelerate the formation of quinonoid-BH2. Coactivator for HNF1A-dependent transcription. Regulates the dimerization of homeodomain protein HNF1A and enhances its transcriptional activity. Also acts as a coactivator for HNF1B-dependent transcription. This is Pterin-4-alpha-carbinolamine dehydratase (Pcbd1) from Rattus norvegicus (Rat).